The sequence spans 309 residues: MEIQFLGTSAGQPSKSRNVSCTALKLLDELNEVWLFDVGEATQHQILKTNIRPRKVTRIFISHTHGDHIFGLPGFLSSRSFQGDGGPLTIYGPAGIEQFVQTSLKVSRTRVSYPIKYVVLKEDGLIFENNLFAVYTARLDHRVPSFGFRVVEKPRPGELLMDKVAEYNVPNGPLLGQLKAGKTITLSDGQKLDGRDFLGKERPGRVVTIIYDTRPTENIGKLADHADVLVHESTFNGDEEKMAHRYFHSTCLDAARIARDRHVRKLYLTHISARYTGKAGKELEHEARKIFKHTRLANDLDSFEITLRG.

His63, His65, Asp67, His68, His141, Asp212, and His270 together coordinate Zn(2+). Asp67 serves as the catalytic Proton acceptor.

This sequence belongs to the RNase Z family. As to quaternary structure, homodimer. The cofactor is Zn(2+).

The catalysed reaction is Endonucleolytic cleavage of RNA, removing extra 3' nucleotides from tRNA precursor, generating 3' termini of tRNAs. A 3'-hydroxy group is left at the tRNA terminus and a 5'-phosphoryl group is left at the trailer molecule.. Its function is as follows. Zinc phosphodiesterase, which displays some tRNA 3'-processing endonuclease activity. Probably involved in tRNA maturation, by removing a 3'-trailer from precursor tRNA. This Lactobacillus gasseri (strain ATCC 33323 / DSM 20243 / BCRC 14619 / CIP 102991 / JCM 1131 / KCTC 3163 / NCIMB 11718 / NCTC 13722 / AM63) protein is Ribonuclease Z.